The chain runs to 1005 residues: MTCTKDARLQLGREALQAAPTLLVPAVLLGGVLGLGLGLWLGCRASHLRARLQKDDRKRLLGSSEPPAQSLRDTGSQAKARRRQRETTRDEDAPEVCEPSLSGNITAFALKARVVYPINQKFRPLADGSSHPSLHENLTQAAAILPHLPHQPAEASPASSLGSLSQAGKEDGSSSSSMRSTYSDDRILQCAFLRVGSFPEILACESVDIDLCVCSLHLKDLLQVDTALRQEKHLMFIQILKACLLDFFPKKKPDDELCQKVLSKQEHDLEELEKGLQARLANTEMLGTGDSGYVSLADVERKERELSEQLIDNMGAFWKQMESIQPTLMDQFKCSSSKARQFMMTLTGRMIVAEGLLHDSQDLHVLDTLERTMGRSHLARMVEFLRTQIQEETKCRLAAISRGLELLTVQGQLSGRQKEELLTQQHKAFWEEAERFGREFTQRGKDLVQASQARQAEAAAELTQTQEEERRSFLADSQLTSDPGEFLKAFHEVLERQRLTRSDQEGDEDTRITEAMAALCQELYCSTMGTFQKFVDSLFLKTLPEVTSLPVAECETLRQQVQEQAARQLGQADRFRRRQWGLLCDLLEQDKRVWLEEGTLSTVLQRQLRDHHESTIHGVLSRFSGLSEESSRGILQGHELLLCSALRRLALRGTTITALAQMRLSGKKRLLQELHEQLALEQGVSPCLEEHQWQLLRALEARIQEEAARLEDEAQQTGLRLQQQLLAEAQEAGRLLQLHMERVIGQALLVHARNVASKGRTREKEDFKRTLVETVVESVYVTSTSVNRLVQAHYQAVGKLLQAHEEQLLQRLKTLQGERINAYKLWKKQEFSDPSLESQTADGTHGASQGVQQRMLSQQKRLLDQFTKHQQGRLNSQRQKAQELDQLQAQLETQLQEAEQTLISELSTLARVPLPENKPFSNKRGLPEKPVRTKRKKPPPREREDLGTPNDDHLALADHTTGPLSTTYSASPPIRVHSGGRLDQQDSEAGDGESTSKILQKGSNL.

Residues 1–21 (MTCTKDARLQLGREALQAAPT) lie on the Extracellular side of the membrane. A helical membrane pass occupies residues 22-42 (LLVPAVLLGGVLGLGLGLWLG). Topologically, residues 43–1005 (CRASHLRARL…SKILQKGSNL (963 aa)) are cytoplasmic. 4 disordered regions span residues 58 to 98 (KRLL…EVCE), 150 to 180 (HQPA…SMRS), 834 to 853 (PSLE…GVQQ), and 914 to 1005 (LPEN…GSNL). Polar residues-rich tracts occupy residues 157-166 (PASSLGSLSQ) and 835-853 (SLES…GVQQ). The segment covering 939–956 (PPREREDLGTPNDDHLAL) has biased composition (basic and acidic residues). Residues 993-1005 (ESTSKILQKGSNL) are compositionally biased toward polar residues.

Component of the EvC complex composed of EFCAB7, IQCE, EVC2 and EVC; built from two subcomplexes, EVC2:EVC and EFCAB7:IQCE. Interacts with EVC2. Interacts with EFCAB7. Interacts with IQCE. In terms of tissue distribution, expressed in the developing skeleton and the orofacial region. Expression is general to all the cartilaginous components of the skeleton, including the chondrocranium, the vertebrae, the rib cage, and the axial skeleton by 15.5 dpc.

It is found in the cell membrane. Its subcellular location is the cytoplasm. The protein resides in the cytoskeleton. It localises to the cilium basal body. The protein localises to the cell projection. It is found in the cilium. Its subcellular location is the cilium membrane. Its function is as follows. Component of the EvC complex that positively regulates ciliary Hedgehog (Hh) signaling. Involved in endochondral growth and skeletal development. The protein is EvC complex member EVC (Evc) of Mus musculus (Mouse).